Consider the following 256-residue polypeptide: Cell division protein DivIB (256 aa).

Residues 1 to 30 (MNNSKVIKLQDRVPKLKNQKKKNKKNVNHR) are Cytoplasmic-facing. The chain crosses the membrane as a helical span at residues 31–51 (LILYISILFLLVLFLIYFRSP). Topologically, residues 52–256 (LSNIKKISVF…KELGAEEKKE (205 aa)) are extracellular. Residues 53–121 (SNIKKISVFG…NNIDIHIEEY (69 aa)) form the POTRA domain.

This sequence belongs to the FtsQ/DivIB family. DivIB subfamily.

Its subcellular location is the cell membrane. In terms of biological role, cell division protein that may be involved in stabilizing or promoting the assembly of the division complex. In Bacillus cereus (strain ATCC 14579 / DSM 31 / CCUG 7414 / JCM 2152 / NBRC 15305 / NCIMB 9373 / NCTC 2599 / NRRL B-3711), this protein is Cell division protein DivIB.